Reading from the N-terminus, the 541-residue chain is Peptidyl-alpha-hydroxyglycine alpha-amidating lyase 1 (541 aa).

The first 33 residues, 1-33 (MKSTDSAKCLGSKSLAICCLLLHLLLCIRPAVS), serve as a signal peptide directing secretion. Residues 34–458 (QTQSPQRYLH…VAVHHPSGKA (425 aa)) are Extracellular-facing. N-linked (GlcNAc...) asparagine glycosylation occurs at N92. 3 NHL repeats span residues 164–205 (GKVQ…FPPR), 215–258 (LGDA…YSRK), and 272–314 (GISY…FLSS). 2 disulfide bridges follow: C228/C248 and C299/C310. The N-linked (GlcNAc...) asparagine glycan is linked to N315. An NHL 4 repeat occupies 374–418 (KQLVSKFGPNNLQFQNPHDVAVTADGNEIYVAELNPMRIHKFVHR). The helical transmembrane segment at 459-479 (ILVASLMLLFAGSTFALALIF) threads the bilayer. The Cytoplasmic segment spans residues 480–541 (ARRRKRGCLP…TKTLASAQYA (62 aa)). The interval 521 to 541 (LDQQASDEEQETKTLASAQYA) is disordered.

The protein belongs to the peptidyl-alpha-hydroxyglycine alpha-amidating lyase family. Zn(2+) is required as a cofactor. In terms of processing, N-glycosylated. As to expression, widely expressed. In mature larvae, it is ubiquitously expressed with a low expression in all cells and a stronger expression in a subset of neurons. Colocalizes with neuropeptide proctolin. In adults, weak expression is observed in most neuronal cell bodies and in scattered large cells throughout the protocerebrum and also in the subesophageal neuromeres (at protein level).

The protein resides in the cell membrane. It catalyses the reaction a [peptide]-C-terminal (2S)-2-hydroxyglycine = a [peptide]-C-terminal amide + glyoxylate. Its function is as follows. Peptidyl-alpha-hydroxylglycine alpha-amidating lyase that catalyzes an essential reaction in C-terminal alpha-amidation of peptides. Mediates the dismutation of the unstable peptidyl(2-hydroxyglycine) intermediate to glyoxylate and the corresponding desglycine peptide amide. C-terminal amidation of peptides such as neuropeptides is essential for full biological activity. The polypeptide is Peptidyl-alpha-hydroxyglycine alpha-amidating lyase 1 (Pal1) (Drosophila melanogaster (Fruit fly)).